A 359-amino-acid polypeptide reads, in one-letter code: Probable S-adenosylmethionine-dependent methyltransferase At5g38100 (359 aa).

The S-adenosyl-L-homocysteine site is built by Tyr19, Cys63, Asn68, Asp104, Ser133, and Phe134. The Mg(2+) site is built by Asn172, Asp258, and Phe260.

The protein belongs to the methyltransferase superfamily. Type-7 methyltransferase family. In terms of assembly, homodimer. Requires Mg(2+) as cofactor.

The polypeptide is Probable S-adenosylmethionine-dependent methyltransferase At5g38100 (Arabidopsis thaliana (Mouse-ear cress)).